The following is an 857-amino-acid chain: Blue light receptor lreA (857 aa).

3 PAS domains span residues 306–328, 479–542, and 608–642; these read IIYV…VGQN, LVEN…TTTD, and LSKS…DLMD. Residues 811–836 form a GATA-type zinc finger; the sequence is CAICQTKKTPEWRRGPSGERDLCNSC.

Transcription factor that acts as a blue light sensor. Plays crucial roles in fungal growth and asexual development. Involved in conidiophore formation, sclerotium production, and conidial stress tolerance. Promotes conidiation by inducing the expression of brlA and abaA. Positively regulates the fungal pathogenicity towards maize. In blue light conditions, inhibits aflatoxin B1 (AFB1) biosynthesis by down-regulating the expression of key genes such as aflA, aflJ, aflH, aflO and aflK. This is Blue light receptor lreA from Aspergillus flavus.